The primary structure comprises 491 residues: Chromosomal replication initiator protein DnaA (491 aa).

Residues methionine 1 to leucine 69 are domain I, interacts with DnaA modulators. The interval leucine 69 to leucine 154 is domain II. Residues proline 155–serine 371 form a domain III, AAA+ region region. ATP-binding residues include glycine 199, glycine 201, lysine 202, and threonine 203. Residues lysine 372–arginine 491 are domain IV, binds dsDNA.

The protein belongs to the DnaA family. In terms of assembly, oligomerizes as a right-handed, spiral filament on DNA at oriC.

Its subcellular location is the cytoplasm. Plays an essential role in the initiation and regulation of chromosomal replication. ATP-DnaA binds to the origin of replication (oriC) to initiate formation of the DNA replication initiation complex once per cell cycle. Binds the DnaA box (a 9 base pair repeat at the origin) and separates the double-stranded (ds)DNA. Forms a right-handed helical filament on oriC DNA; dsDNA binds to the exterior of the filament while single-stranded (ss)DNA is stabiized in the filament's interior. The ATP-DnaA-oriC complex binds and stabilizes one strand of the AT-rich DNA unwinding element (DUE), permitting loading of DNA polymerase. After initiation quickly degrades to an ADP-DnaA complex that is not apt for DNA replication. Binds acidic phospholipids. In Francisella tularensis subsp. holarctica (strain LVS), this protein is Chromosomal replication initiator protein DnaA.